The chain runs to 202 residues: Recoverin (202 aa).

The N-myristoyl glycine moiety is linked to residue G2. C39 is subject to Cysteine sulfenic acid (-SOH). EF-hand domains lie at 41–59 (SGRI…FFPD), 61–96 (DPKA…TTAG), 97–132 (KPTQ…IFKM), and 147–182 (TPEK…NKEI). Residues D74, N76, D78, T80, E85, D110, D112, N114, T116, and E121 each contribute to the Ca(2+) site. An interaction with GRK1 region spans residues 189 to 192 (EPQK).

The protein belongs to the recoverin family. Homodimer; disulfide-linked. Homodimerization is caused by prolonged intense illumination. May form a complex composed of RHO, GRK1 and RCVRN in a Ca(2+)-dependent manner; RCVRN prevents the interaction between GRK1 and RHO. Interacts (via C-terminus) with GRK1 (via N-terminus); the interaction is Ca(2+)-dependent. In terms of processing, the N-terminal glycine is linked to one of four different types of acyl groups. The most abundant is myristoleate (14:1), but 14:0, 14:2, and 12:0 acyl residues are also present. The Ca(2+) induced exposure of the myristoyl group, known as the calcium-myristoyl switch, promotes RCVRN binding to the photoreceptor cell membranes only when intracellular Ca(2+) concentration is high. Post-translationally, oxidation on Cys-39 occurs in response to prolonged intense illumination and results in the formation of disulfide homodimers, and to a lesser extent disulfide-linked heterodimers. As to expression, expressed in rod photoreceptors in the retina (at protein level).

Its subcellular location is the photoreceptor inner segment. The protein localises to the cell projection. It is found in the cilium. The protein resides in the photoreceptor outer segment. It localises to the photoreceptor outer segment membrane. Its subcellular location is the perikaryon. Its function is as follows. Acts as a calcium sensor and regulates phototransduction of cone and rod photoreceptor cells. Modulates light sensitivity of cone photoreceptor in dark and dim conditions. In response to high Ca(2+) levels induced by low light levels, prolongs RHO/rhodopsin activation in rod photoreceptor cells by binding to and inhibiting GRK1-mediated phosphorylation of RHO/rhodopsin. Plays a role in scotopic vision/enhances vision in dim light by enhancing signal transfer between rod photoreceptors and rod bipolar cells. Improves rod photoreceptor sensitivity in dim light and mediates response of rod photoreceptors to facilitate detection of change and motion in bright light. This Mus musculus (Mouse) protein is Recoverin (Rcvrn).